The chain runs to 989 residues: Mediator of RNA polymerase II transcription subunit 24 (989 aa).

6 consecutive short sequence motifs (LXXLL motif) follow at residues 128–132 (LHWLL), 344–348 (LTPLL), 448–452 (LDLLL), 557–561 (LVALL), 788–792 (LPGLL), and 857–861 (LMRLL). Phosphoserine occurs at positions 862 and 873.

The protein belongs to the Mediator complex subunit 24 family. As to quaternary structure, component of the Mediator complex, which is composed of MED1, MED4, MED6, MED7, MED8, MED9, MED10, MED11, MED12, MED13, MED13L, MED14, MED15, MED16, MED17, MED18, MED19, MED20, MED21, MED22, MED23, MED24, MED25, MED26, MED27, MED29, MED30, MED31, CCNC, CDK8 and CDC2L6/CDK11. The MED12, MED13, CCNC and CDK8 subunits form a distinct module termed the CDK8 module. Mediator containing the CDK8 module is less active than Mediator lacking this module in supporting transcriptional activation. Individual preparations of the Mediator complex lacking one or more distinct subunits have been variously termed ARC, CRSP, DRIP, PC2, SMCC and TRAP. Interacts with AR. As to expression, ubiquitous. Abundant in skeletal muscle, heart and placenta.

It is found in the nucleus. Component of the Mediator complex, a coactivator involved in the regulated transcription of nearly all RNA polymerase II-dependent genes. Mediator functions as a bridge to convey information from gene-specific regulatory proteins to the basal RNA polymerase II transcription machinery. Mediator is recruited to promoters by direct interactions with regulatory proteins and serves as a scaffold for the assembly of a functional preinitiation complex with RNA polymerase II and the general transcription factors. This is Mediator of RNA polymerase II transcription subunit 24 (MED24) from Homo sapiens (Human).